The chain runs to 160 residues: Transcription elongation factor GreA (160 aa).

A coiled-coil region spans residues 50–70; it reads AAREQQSFNEGRIQELEAKLS.

It belongs to the GreA/GreB family.

Its function is as follows. Necessary for efficient RNA polymerase transcription elongation past template-encoded arresting sites. The arresting sites in DNA have the property of trapping a certain fraction of elongating RNA polymerases that pass through, resulting in locked ternary complexes. Cleavage of the nascent transcript by cleavage factors such as GreA or GreB allows the resumption of elongation from the new 3'terminus. GreA releases sequences of 2 to 3 nucleotides. This chain is Transcription elongation factor GreA, found in Legionella pneumophila (strain Paris).